A 290-amino-acid polypeptide reads, in one-letter code: Phosphatidylserine decarboxylase proenzyme (290 aa).

Residues D96, H153, and S257 each act as charge relay system; for autoendoproteolytic cleavage activity in the active site. S257 acts as the Schiff-base intermediate with substrate; via pyruvic acid; for decarboxylase activity in catalysis. Pyruvic acid (Ser); by autocatalysis is present on S257.

It belongs to the phosphatidylserine decarboxylase family. PSD-B subfamily. Prokaryotic type I sub-subfamily. In terms of assembly, heterodimer of a large membrane-associated beta subunit and a small pyruvoyl-containing alpha subunit. Pyruvate serves as cofactor. Post-translationally, is synthesized initially as an inactive proenzyme. Formation of the active enzyme involves a self-maturation process in which the active site pyruvoyl group is generated from an internal serine residue via an autocatalytic post-translational modification. Two non-identical subunits are generated from the proenzyme in this reaction, and the pyruvate is formed at the N-terminus of the alpha chain, which is derived from the carboxyl end of the proenzyme. The autoendoproteolytic cleavage occurs by a canonical serine protease mechanism, in which the side chain hydroxyl group of the serine supplies its oxygen atom to form the C-terminus of the beta chain, while the remainder of the serine residue undergoes an oxidative deamination to produce ammonia and the pyruvoyl prosthetic group on the alpha chain. During this reaction, the Ser that is part of the protease active site of the proenzyme becomes the pyruvoyl prosthetic group, which constitutes an essential element of the active site of the mature decarboxylase.

It is found in the cell membrane. It carries out the reaction a 1,2-diacyl-sn-glycero-3-phospho-L-serine + H(+) = a 1,2-diacyl-sn-glycero-3-phosphoethanolamine + CO2. The protein operates within phospholipid metabolism; phosphatidylethanolamine biosynthesis; phosphatidylethanolamine from CDP-diacylglycerol: step 2/2. In terms of biological role, catalyzes the formation of phosphatidylethanolamine (PtdEtn) from phosphatidylserine (PtdSer). This is Phosphatidylserine decarboxylase proenzyme from Haemophilus influenzae (strain ATCC 51907 / DSM 11121 / KW20 / Rd).